We begin with the raw amino-acid sequence, 552 residues long: Polypyrimidine tract-binding protein 3 (552 aa).

The residue at position 1 (Met1) is an N-acetylmethionine. Ser17 is subject to Phosphoserine. Residues 32 to 43 (MNSSTPSTANGN) are compositionally biased toward polar residues. Positions 32–55 (MNSSTPSTANGNDSKKFKRDRPPC) are disordered. 3 RRM domains span residues 59-143 (RVLH…NLPN), 182-258 (LRII…FSKL), and 358-432 (SVLL…LSKH). Lys65 participates in a covalent cross-link: Glycyl lysine isopeptide (Lys-Gly) (interchain with G-Cter in SUMO2). Tyr127 carries the post-translational modification Phosphotyrosine. Thr138 carries the post-translational modification Phosphothreonine. Lys216 participates in a covalent cross-link: Glycyl lysine isopeptide (Lys-Gly) (interchain with G-Cter in SUMO2). Lys423 carries the post-translational modification N6-acetyllysine. The tract at residues 435–455 (VQLPREGQEDQGLTKDFSNSP) is disordered. Position 454 is a phosphoserine (Ser454). An RRM 4 domain is found at 475–550 (ATLHLSNIPP…HHLRVSFSKS (76 aa)).

Interacts with THBS4 (via the acidic amphipathic C-terminus). Expressed in several hematopoietic cell lines examined.

Functionally, RNA-binding protein that mediates pre-mRNA alternative splicing regulation. Plays a role in the regulation of cell proliferation, differentiation and migration. Positive regulator of EPO-dependent erythropoiesis. Participates in cell differentiation regulation by repressing tissue-specific exons. Promotes FAS exon 6 skipping. Binds RNA, preferentially to both poly(G) and poly(U). The polypeptide is Polypyrimidine tract-binding protein 3 (PTBP3) (Homo sapiens (Human)).